The following is a 35-amino-acid chain: Photosystem II reaction center protein Psb30 (35 aa).

A helical transmembrane segment spans residues 7–27 (VFVQLALLALIVLAGPAVILL).

This sequence belongs to the Psb30/Ycf12 family. As to quaternary structure, PSII is composed of 1 copy each of membrane proteins PsbA, PsbB, PsbC, PsbD, PsbE, PsbF, PsbH, PsbI, PsbJ, PsbK, PsbL, PsbM, PsbT, PsbX, PsbY, PsbZ, Psb30/Ycf12, peripheral proteins PsbO, CyanoQ (PsbQ), PsbU, PsbV and a large number of cofactors. It forms dimeric complexes.

Its subcellular location is the cellular thylakoid membrane. In terms of biological role, a core subunit of photosystem II (PSII), probably helps stabilize the reaction center. In Synechococcus sp. (strain JA-2-3B'a(2-13)) (Cyanobacteria bacterium Yellowstone B-Prime), this protein is Photosystem II reaction center protein Psb30.